Reading from the N-terminus, the 117-residue chain is Large ribosomal subunit protein uL18 (117 aa).

The protein belongs to the universal ribosomal protein uL18 family. Part of the 50S ribosomal subunit; part of the 5S rRNA/L5/L18/L25 subcomplex. Contacts the 5S and 23S rRNAs.

This is one of the proteins that bind and probably mediate the attachment of the 5S RNA into the large ribosomal subunit, where it forms part of the central protuberance. This chain is Large ribosomal subunit protein uL18, found in Proteus mirabilis (strain HI4320).